A 410-amino-acid polypeptide reads, in one-letter code: LanC-like protein GCR2 (410 aa).

Zn(2+) contacts are provided by Cys283, Cys328, and His329.

Belongs to the LanC-like protein family. May interact (via C-terminus) with GPA1.

In terms of biological role, may play a role in abscisic acid (ABA) signaling. The polypeptide is LanC-like protein GCR2 (GCR2) (Arabidopsis thaliana (Mouse-ear cress)).